Consider the following 129-residue polypeptide: Large ribosomal subunit protein bL19 (129 aa).

Functionally, this protein is located at the 30S-50S ribosomal subunit interface and may play a role in the structure and function of the aminoacyl-tRNA binding site. This Rhodopseudomonas palustris (strain ATCC BAA-98 / CGA009) protein is Large ribosomal subunit protein bL19.